Here is a 587-residue protein sequence, read N- to C-terminus: DELLA protein RGA (587 aa).

Positions 1-26 are disordered; that stretch reads MKRDHHQFQGRLSNHGTSSSSSSISK. A DELLA motif motif is present at residues 44-48; sequence DELLA. Positions 66-70 match the LEXLE motif motif; the sequence is LEQLE. Positions 89-93 match the VHYNP motif motif; the sequence is VHYNP. The interval 152-181 is disordered; it reads IDSSSSSNNQNKRLKSCSSPDSMVTSTSTG. Residues 153 to 175 are compositionally biased toward polar residues; it reads DSSSSSNNQNKRLKSCSSPDSMV. One can recognise a GRAS domain in the interval 212–581; it reads VDSQENGVRL…RPLITTSAWK (370 aa). Residues 219–273 are leucine repeat I (LRI); that stretch reads VRLVHALMACAEAIQQNNLTLAEALVKQIGCLAVSQAGAMRKVATYFAEALARRI. The tract at residues 292–357 is VHIID; it reads QMHFYETCPY…GGPPTFRLTG (66 aa). The short motif at 323-327 is the VHIID element; that stretch reads VHVID. The tract at residues 371–403 is leucine repeat II (LRII); that stretch reads EVGCKLAQLAEAIHVEFEYRGFVANSLADLDAS. Residues 415–502 are PFYRE; that stretch reads VAVNSVFELH…EVYLGKQICN (88 aa). Positions 423–427 match the LXXLL motif motif; it reads LHKLL. Residues 505–581 form an SAW region; that stretch reads ACEGPDRVER…RPLITTSAWK (77 aa).

The protein belongs to the GRAS family. DELLA subfamily. Interacts directly with the GID2/SLY1 component of the SCF(GID2) complex. Interacts (via N-terminus) with GID1A, GID1B and GID1B (via N-terminus). Binds to bHLH transcription factors such as MYC2, PIF1, PIF4, PIF6 and SPT. Interacts with the BOI proteins BOI, BRG1, BRG2 and BRG3. Interacts with NFYC9. Interacts with TOPP4. Interacts with FLZ5. Binds to zinc finger proteins MGP/IDD3, IDD4, IDD5, BIB/IDD9 and JKD/IDD10 in the nucleus. Binds to and coactivates GAF1/IDD2 and ENY/IDD1. Binds to PDF2 and ATML1. Post-translationally, phosphorylated. Phosphorylation may increase the interaction with GID2. Gibberellin (GA) induces dephosphorylation of RGA by TOPP4 and subsequent degradation by the proteasomal pathway. In terms of processing, ubiquitinated. Upon GA application it is ubiquitinated by the SCF(GID2) complex, leading to its subsequent degradation. Post-translationally, O-fucosylated by SPY. O-fucosylation enhances RGA activity by promoting RGA binding to key transcription factors in brassinosteroid and light signaling pathways. In terms of tissue distribution, ubiquitously expressed. Expressed in roots, rosette leaves, bolting and mature stems, young and mature siliques, flower buds and influorescences.

It is found in the nucleus. Its function is as follows. Probable transcriptional regulator that acts as a repressor of the gibberellin (GA) signaling pathway. Probably acts by participating in large multiprotein complexes that repress transcription of GA-inducible genes. Positively regulates XERICO expression in seeds. Upon GA application, it is degraded by the proteasome, allowing the GA signaling pathway. Compared to other DELLA proteins, it is the most sensitive to GA application. No effect of the BOI proteins on its stability. Its activity is probably regulated by other phytohormones such as auxin and ethylene, attenuation of auxin transport delaying its GA-induced degradation. Involved in the regulation of seed dormancy and germination, including glucose-induced delay of seed germination. The protein is DELLA protein RGA of Arabidopsis thaliana (Mouse-ear cress).